The chain runs to 153 residues: Pheromone-binding protein Gp-9 (153 aa).

Residues 1 to 19 (MKTLILHICIFALVAFASA) form the signal peptide. Intrachain disulfides connect Cys37–Cys77, Cys73–Cys129, and Cys118–Cys138.

This sequence belongs to the PBP/GOBP family. In terms of assembly, homodimer.

It is found in the secreted. In terms of biological role, colony queen number, a major feature of social organization, is associated with worker genotype for Gp-9. Colonies are headed by either a single reproductive queen (monogyne form) or multiple queens (polygyne form). Differences in worker Gp-9 genotypes between social forms may cause differences in workers' abilities to recognize queens and regulate their numbers. The sequence is that of Pheromone-binding protein Gp-9 from Solenopsis nigella gensterblumi (Fire ant).